The following is a 97-amino-acid chain: Aspartyl/glutamyl-tRNA(Asn/Gln) amidotransferase subunit C (97 aa).

Belongs to the GatC family. As to quaternary structure, heterotrimer of A, B and C subunits.

The enzyme catalyses L-glutamyl-tRNA(Gln) + L-glutamine + ATP + H2O = L-glutaminyl-tRNA(Gln) + L-glutamate + ADP + phosphate + H(+). It carries out the reaction L-aspartyl-tRNA(Asn) + L-glutamine + ATP + H2O = L-asparaginyl-tRNA(Asn) + L-glutamate + ADP + phosphate + 2 H(+). Allows the formation of correctly charged Asn-tRNA(Asn) or Gln-tRNA(Gln) through the transamidation of misacylated Asp-tRNA(Asn) or Glu-tRNA(Gln) in organisms which lack either or both of asparaginyl-tRNA or glutaminyl-tRNA synthetases. The reaction takes place in the presence of glutamine and ATP through an activated phospho-Asp-tRNA(Asn) or phospho-Glu-tRNA(Gln). The chain is Aspartyl/glutamyl-tRNA(Asn/Gln) amidotransferase subunit C from Prochlorococcus marinus (strain AS9601).